We begin with the raw amino-acid sequence, 956 residues long: RNA-binding protein 44 (956 aa).

The interval 301–321 is disordered; it reads DNTQNNQNQSYNPTEENDHNV. The RRM domain occupies 750 to 824; the sequence is SLLCITCLPG…HAVQVVHLSG (75 aa). A disordered region spans residues 831–855; sequence KPSDLSHSASESHKEDTAGDELRTK. The span at 840–854 shows a compositional bias: basic and acidic residues; that stretch reads SESHKEDTAGDELRT.

The protein resides in the cytoplasm. Its function is as follows. Component of intercellular bridges during meiosis. Intercellular bridges are evolutionarily conserved structures that connect differentiating germ cells. Not required for fertility. In Danio rerio (Zebrafish), this protein is RNA-binding protein 44 (rbm44).